The sequence spans 331 residues: Aspartate carbamoyltransferase catalytic subunit (331 aa).

Arg55 and Thr56 together coordinate carbamoyl phosphate. Lys84 is a binding site for L-aspartate. Carbamoyl phosphate-binding residues include Arg105, His133, and Gln136. Arg166 and Arg229 together coordinate L-aspartate. Carbamoyl phosphate is bound by residues Leu268 and Pro269.

The protein belongs to the aspartate/ornithine carbamoyltransferase superfamily. ATCase family. As to quaternary structure, heterododecamer (2C3:3R2) of six catalytic PyrB chains organized as two trimers (C3), and six regulatory PyrI chains organized as three dimers (R2).

It catalyses the reaction carbamoyl phosphate + L-aspartate = N-carbamoyl-L-aspartate + phosphate + H(+). It functions in the pathway pyrimidine metabolism; UMP biosynthesis via de novo pathway; (S)-dihydroorotate from bicarbonate: step 2/3. Its function is as follows. Catalyzes the condensation of carbamoyl phosphate and aspartate to form carbamoyl aspartate and inorganic phosphate, the committed step in the de novo pyrimidine nucleotide biosynthesis pathway. This chain is Aspartate carbamoyltransferase catalytic subunit, found in Alkaliphilus oremlandii (strain OhILAs) (Clostridium oremlandii (strain OhILAs)).